The sequence spans 191 residues: Potassium-transporting ATPase KdpC subunit (191 aa).

A helical transmembrane segment spans residues 10–30 (ITLVFCVFFSVFYILVLWLFA).

This sequence belongs to the KdpC family. As to quaternary structure, the system is composed of three essential subunits: KdpA, KdpB and KdpC.

The protein resides in the cell inner membrane. Part of the high-affinity ATP-driven potassium transport (or Kdp) system, which catalyzes the hydrolysis of ATP coupled with the electrogenic transport of potassium into the cytoplasm. This subunit acts as a catalytic chaperone that increases the ATP-binding affinity of the ATP-hydrolyzing subunit KdpB by the formation of a transient KdpB/KdpC/ATP ternary complex. The protein is Potassium-transporting ATPase KdpC subunit of Bacteroides fragilis (strain YCH46).